The following is a 363-amino-acid chain: NAD(P)H-quinone oxidoreductase subunit 1, chloroplastic (363 aa).

6 helical membrane passes run 30-50 (LVPI…IVWL), 98-118 (FSIG…IIPF), 129-149 (IGVF…LMSG), 248-268 (YSGI…LVSS), 300-320 (VFGT…FLFI), and 336-356 (LLNL…LLTT).

Belongs to the complex I subunit 1 family. NDH is composed of at least 16 different subunits, 5 of which are encoded in the nucleus.

The protein localises to the plastid. It is found in the chloroplast thylakoid membrane. The catalysed reaction is a plastoquinone + NADH + (n+1) H(+)(in) = a plastoquinol + NAD(+) + n H(+)(out). It catalyses the reaction a plastoquinone + NADPH + (n+1) H(+)(in) = a plastoquinol + NADP(+) + n H(+)(out). In terms of biological role, NDH shuttles electrons from NAD(P)H:plastoquinone, via FMN and iron-sulfur (Fe-S) centers, to quinones in the photosynthetic chain and possibly in a chloroplast respiratory chain. The immediate electron acceptor for the enzyme in this species is believed to be plastoquinone. Couples the redox reaction to proton translocation, and thus conserves the redox energy in a proton gradient. The sequence is that of NAD(P)H-quinone oxidoreductase subunit 1, chloroplastic from Vitis vinifera (Grape).